Reading from the N-terminus, the 1235-residue chain is Ubiquitin carboxyl-terminal hydrolase 40 (1235 aa).

The USP domain maps to serine 41–alanine 482. Residue cysteine 50 is the Nucleophile of the active site. The active-site Proton acceptor is the histidine 305.

It belongs to the peptidase C19 family.

The catalysed reaction is Thiol-dependent hydrolysis of ester, thioester, amide, peptide and isopeptide bonds formed by the C-terminal Gly of ubiquitin (a 76-residue protein attached to proteins as an intracellular targeting signal).. The chain is Ubiquitin carboxyl-terminal hydrolase 40 (Usp40) from Mus musculus (Mouse).